The sequence spans 148 residues: FAD synthase (148 aa).

ATP contacts are provided by residues 11 to 12, 16 to 19, Asn94, and Tyr121; these read TF and HPGH.

Belongs to the archaeal FAD synthase family. As to quaternary structure, homodimer. A divalent metal cation is required as a cofactor.

It catalyses the reaction FMN + ATP + H(+) = FAD + diphosphate. Its pathway is cofactor biosynthesis; FAD biosynthesis; FAD from FMN: step 1/1. Catalyzes the transfer of the AMP portion of ATP to flavin mononucleotide (FMN) to produce flavin adenine dinucleotide (FAD) coenzyme. The sequence is that of FAD synthase from Methanoregula boonei (strain DSM 21154 / JCM 14090 / 6A8).